Here is a 174-residue protein sequence, read N- to C-terminus: Ribosome maturation factor RimM (174 aa).

Residues 97 to 171 form the PRC barrel domain; the sequence is SDGEYYWCDL…RMTVSLPEGL (75 aa).

The protein belongs to the RimM family. As to quaternary structure, binds ribosomal protein uS19.

The protein localises to the cytoplasm. Its function is as follows. An accessory protein needed during the final step in the assembly of 30S ribosomal subunit, possibly for assembly of the head region. Essential for efficient processing of 16S rRNA. May be needed both before and after RbfA during the maturation of 16S rRNA. It has affinity for free ribosomal 30S subunits but not for 70S ribosomes. The polypeptide is Ribosome maturation factor RimM (Geotalea daltonii (strain DSM 22248 / JCM 15807 / FRC-32) (Geobacter daltonii)).